The chain runs to 906 residues: MLGKLVKKVVGSRNDRIIKRKRRLVKKINQLEPTIAALSDEALGRKTLEFRERLSNGETIDDLLVEAFAVVREASRRVLNMRHFDVQLIGAMVLNDGKIAEMKTGEGKTLVATLAAYLNALPGKGCHVVTVNDYLARRDAEWMGKLYGFLGLSTGVIVSNLDQEQRRRAYACDITYGTNNEFGFDYLRDNMAFTLDQRVQRDPFFAIVDEVDSILIDEARTPLIISGPTEDRSDLYHKVNALIPHLTRQEKEGGPGDYWVDEKARQVYLTESGHETIERLMVEQGLIGSDESLYDAVNIRLMHYINAALKAHALFQRDVDYIVRDGQVIIVDEFTGRAMPGRRWSEGLHQAVEAKENVPVHNENQTLASITFQNYFRLYEKLAGMTGTADTEAAEFHQIYGLEVVMIPPNRPMIRNDMGDLVYLTAREKFAAIVEDIKYCVEHGKPVLVGTTSIENSELLSGILRQAGVPHQVLNAKHHEQEAHIIAQAGRPGAVTIATNMAGRGTDIVLGGSLEEDLAHADPAMAEQVKAEWQQRHDAAVAAGGLHVIGSERHESRRIDNQLRGRSGRQGDPGSSRFYLSLEDPLMRIFASDRVAVLMQRLGMKEGESIEHPWVTRAIENAQRKVEARNFDIRKQLLEYDNVANDQRKVIYHMRTELMRADDISRTIEDIRHDVLGRMFAEHVPPHSLEEQWDVQGLQEVIEREIGLSLPIQRWLDDEPDLHEETLLERIIQEADAAYAAKVEAIGTQVMRHFEKSVMLQVLDNAWKEHLASMDHLRQGIHLRGYAQKDPKQEYKREAFEMFTGMLDSIKQEVVGIVSRVQVHSEEEVQEMEEQGRQPQEMQFQHAEVSALTLEEPPAAPPEESEGYAIPEGPRPFVRSGEKIGRNDPCPCGSGKKYKQCHGRLA.

Residues Q87, 105–109 (GEGKT), and D507 contribute to the ATP site. A compositionally biased stretch (basic and acidic residues) spans 553-563 (RHESRRIDNQL). Disordered regions lie at residues 553 to 576 (RHES…PGSS) and 854 to 906 (LEEP…GRLA). Zn(2+) is bound by residues C890, C892, C901, and H902. The segment covering 896 to 906 (KKYKQCHGRLA) has biased composition (basic residues).

This sequence belongs to the SecA family. Monomer and homodimer. Part of the essential Sec protein translocation apparatus which comprises SecA, SecYEG and auxiliary proteins SecDF-YajC and YidC. Zn(2+) is required as a cofactor.

It is found in the cell inner membrane. The protein resides in the cytoplasm. The catalysed reaction is ATP + H2O + cellular proteinSide 1 = ADP + phosphate + cellular proteinSide 2.. In terms of biological role, part of the Sec protein translocase complex. Interacts with the SecYEG preprotein conducting channel. Has a central role in coupling the hydrolysis of ATP to the transfer of proteins into and across the cell membrane, serving both as a receptor for the preprotein-SecB complex and as an ATP-driven molecular motor driving the stepwise translocation of polypeptide chains across the membrane. This is Protein translocase subunit SecA from Methylococcus capsulatus (strain ATCC 33009 / NCIMB 11132 / Bath).